We begin with the raw amino-acid sequence, 440 residues long: Xylose isomerase (440 aa).

Residues His-101 and Asp-104 contribute to the active site. Positions 232, 268, 271, 296, 307, 309, and 339 each coordinate Mg(2+).

It belongs to the xylose isomerase family. As to quaternary structure, homotetramer. It depends on Mg(2+) as a cofactor.

The protein resides in the cytoplasm. It carries out the reaction alpha-D-xylose = alpha-D-xylulofuranose. This chain is Xylose isomerase, found in Escherichia coli (strain SE11).